Here is a 78-residue protein sequence, read N- to C-terminus: Large ribosomal subunit protein bL28 (78 aa).

It belongs to the bacterial ribosomal protein bL28 family.

The sequence is that of Large ribosomal subunit protein bL28 from Pectobacterium carotovorum subsp. carotovorum (strain PC1).